The primary structure comprises 66 residues: Large ribosomal subunit protein bL35 (66 aa).

2 stretches are compositionally biased toward basic residues: residues 1-15 (MPKL…KRFK) and 28-45 (TKRH…RTRR). The tract at residues 1 to 49 (MPKLKTKSSAKKRFKVTASGRVMSAQSTKRHGMTKRSKRSLRTRRGIAQ) is disordered.

Belongs to the bacterial ribosomal protein bL35 family.

The polypeptide is Large ribosomal subunit protein bL35 (Anaplasma marginale (strain Florida)).